Here is a 441-residue protein sequence, read N- to C-terminus: Methylenetetrahydrofolate--tRNA-(uracil-5-)-methyltransferase TrmFO (441 aa).

An FAD-binding site is contributed by 11–16 (GAGLAG).

The protein belongs to the MnmG family. TrmFO subfamily. It depends on FAD as a cofactor.

Its subcellular location is the cytoplasm. The catalysed reaction is uridine(54) in tRNA + (6R)-5,10-methylene-5,6,7,8-tetrahydrofolate + NADH + H(+) = 5-methyluridine(54) in tRNA + (6S)-5,6,7,8-tetrahydrofolate + NAD(+). It carries out the reaction uridine(54) in tRNA + (6R)-5,10-methylene-5,6,7,8-tetrahydrofolate + NADPH + H(+) = 5-methyluridine(54) in tRNA + (6S)-5,6,7,8-tetrahydrofolate + NADP(+). Its function is as follows. Catalyzes the folate-dependent formation of 5-methyl-uridine at position 54 (M-5-U54) in all tRNAs. The sequence is that of Methylenetetrahydrofolate--tRNA-(uracil-5-)-methyltransferase TrmFO from Lactiplantibacillus plantarum (strain ATCC BAA-793 / NCIMB 8826 / WCFS1) (Lactobacillus plantarum).